We begin with the raw amino-acid sequence, 62 residues long: U10-buthitoxin-Hj1a (62 aa).

An N-terminal signal peptide occupies residues 1 to 22 (MQKIFIILVLFCILKFNVDVEG). 3 disulfide bridges follow: Cys28/Cys46, Cys33/Cys59, and Cys37/Cys61.

This sequence belongs to the short scorpion toxin superfamily. Potassium channel inhibitor family. Alpha-KTx 23 subfamily. Expressed by the venom gland.

The protein resides in the secreted. May block potassium channels. This chain is U10-buthitoxin-Hj1a, found in Hottentotta judaicus (Black scorpion).